A 975-amino-acid chain; its full sequence is Synaptopodin 2-like protein (975 aa).

Residues 6-85 (EVQVTLAGGA…QLVLTVRRVT (80 aa)) form the PDZ domain. Disordered regions lie at residues 18–41 (GFRL…QAGR), 86–214 (DEGS…PAEA), and 314–349 (AGTG…QSDW). Ser105 and Ser108 each carry phosphoserine. Residue Thr138 is modified to Phosphothreonine. Ser140, Ser163, Ser175, and Ser177 each carry phosphoserine. Polar residues predominate over residues 187 to 200 (GSPSQGDSRVSSPS). Low complexity predominate over residues 202 to 214 (EEGAALQPPPAEA). Residues 339-349 (DARSLTNQSDW) show a composition bias toward polar residues. Residues Ser342, Ser347, Ser371, Ser378, and Ser381 each carry the phosphoserine modification. Arg383, Arg463, Arg466, and Arg476 each carry omega-N-methylarginine. Positions 491–649 (KVNEGLGSTS…ETKNSPNPEL (159 aa)) are disordered. Positions 502–516 (APSPFAAPPQGPTPL) are enriched in pro residues. The span at 519-528 (FTTVVPSHTP) shows a compositional bias: polar residues. Low complexity-rich tracts occupy residues 530 to 540 (SGASSSTQRSS) and 571 to 580 (SAAAMTSTAS). Phosphoserine occurs at positions 667 and 675. Residues 687–731 (LGGRSYKTLPQVSPKTPPPMAPKTPPPTTPKTPPPVAPKPGSRGL) are disordered. Residues 701 to 724 (KTPPPMAPKTPPPTTPKTPPPVAP) are compositionally biased toward pro residues. A phosphothreonine mark is found at Thr702 and Thr710. An Omega-N-methylarginine modification is found at Arg754. Residues 772–797 (EATSGSSLNPGLRPRSPSPTPSLPPS) form a disordered region. Residues Ser787 and Ser789 each carry the phosphoserine modification. Residue Thr791 is modified to Phosphothreonine. Residues Arg805, Arg825, and Arg888 each carry the omega-N-methylarginine modification. Ser890 is modified (phosphoserine). A phosphothreonine mark is found at Thr891 and Thr897. Arg909 is modified (omega-N-methylarginine). Arg920 carries the post-translational modification Asymmetric dimethylarginine; alternate. At Arg920 the chain carries Omega-N-methylarginine; alternate. Arg953 and Arg955 each carry omega-N-methylarginine.

The protein belongs to the synaptopodin family.

It is found in the cytoplasm. The protein localises to the cytoskeleton. Its function is as follows. Actin-associated protein that may play a role in modulating actin-based shape. In Mus musculus (Mouse), this protein is Synaptopodin 2-like protein (Synpo2l).